Consider the following 578-residue polypeptide: DNA mismatch repair protein MutL (578 aa).

This sequence belongs to the DNA mismatch repair MutL/HexB family.

Its function is as follows. This protein is involved in the repair of mismatches in DNA. It is required for dam-dependent methyl-directed DNA mismatch repair. May act as a 'molecular matchmaker', a protein that promotes the formation of a stable complex between two or more DNA-binding proteins in an ATP-dependent manner without itself being part of a final effector complex. This is DNA mismatch repair protein MutL from Carboxydothermus hydrogenoformans (strain ATCC BAA-161 / DSM 6008 / Z-2901).